The following is a 264-amino-acid chain: MHNNGRMLGVIGGSGFYTFFGSDTRTVNSDTPYGQPSAPITIGTIGVHDVAFLPRHGAHHQYSAHAVPYRANMWALRALGVRRVFGPCAVGSLDPELEPGAVVVPDQLVDRTSGRADTYFDFGGVHAAFADPYCPTLRAAVTGLPGVVDGGTMVVIQGPRFSTRAESQWFAAAGCNLVNMTGYPEAVLARELELCYAAIALVTDVDAGVAAGDGVKAADVFAAFGENIELLKRLVRAAIDRVADERTCTHCQHHAGVPLPFELP.

Phosphate is bound by residues Ser-14 and 55–56; that span reads RH. Met-180 lines the substrate pocket. Thr-181 is a binding site for phosphate. Position 204-206 (204-206) interacts with substrate; the sequence is DVD.

It belongs to the PNP/MTAP phosphorylase family. MTAP subfamily. As to quaternary structure, homodimer.

It catalyses the reaction S-methyl-5'-thioadenosine + phosphate = 5-(methylsulfanyl)-alpha-D-ribose 1-phosphate + adenine. The protein operates within amino-acid biosynthesis; L-methionine biosynthesis via salvage pathway; S-methyl-5-thio-alpha-D-ribose 1-phosphate from S-methyl-5'-thioadenosine (phosphorylase route): step 1/1. With respect to regulation, not inhibited by adenosine, potently inhibited by MT-DADMe-immucillin A. In terms of biological role, catalyzes the reversible phosphorylation of S-methyl-5'-thioadenosine (MTA) to adenine and 5-methylthioribose-1-phosphate. Involved in the breakdown of MTA, a major by-product of polyamine biosynthesis. Responsible for the first step in the methionine salvage pathway after MTA has been generated from S-adenosylmethionine. Prefers MTA, with 2% activity on adenosine, 0.8% activity on S-adenosyl-L-homocysteine and no activity on other tested nucleosides. This Mycobacterium tuberculosis (strain ATCC 25618 / H37Rv) protein is S-methyl-5'-thioadenosine phosphorylase.